Here is a 98-residue protein sequence, read N- to C-terminus: Acylphosphatase (98 aa).

The Acylphosphatase-like domain occupies 12-98; sequence TYYVRVRGVV…ERRFERFQQQ (87 aa). Catalysis depends on residues Arg-27 and Asn-45.

It belongs to the acylphosphatase family.

The catalysed reaction is an acyl phosphate + H2O = a carboxylate + phosphate + H(+). The protein is Acylphosphatase (acyP) of Burkholderia vietnamiensis (strain G4 / LMG 22486) (Burkholderia cepacia (strain R1808)).